Consider the following 283-residue polypeptide: Pantothenate synthetase (283 aa).

34-41 (MGALHDGH) contributes to the ATP binding site. His41 (proton donor) is an active-site residue. Gln65 serves as a coordination point for (R)-pantoate. Beta-alanine is bound at residue Gln65. 152-155 (GQKD) is a binding site for ATP. Gln158 is a (R)-pantoate binding site. Residues Val181 and 189–192 (MSSR) contribute to the ATP site.

It belongs to the pantothenate synthetase family. In terms of assembly, homodimer.

Its subcellular location is the cytoplasm. The enzyme catalyses (R)-pantoate + beta-alanine + ATP = (R)-pantothenate + AMP + diphosphate + H(+). It participates in cofactor biosynthesis; (R)-pantothenate biosynthesis; (R)-pantothenate from (R)-pantoate and beta-alanine: step 1/1. Functionally, catalyzes the condensation of pantoate with beta-alanine in an ATP-dependent reaction via a pantoyl-adenylate intermediate. The chain is Pantothenate synthetase from Nitrobacter hamburgensis (strain DSM 10229 / NCIMB 13809 / X14).